We begin with the raw amino-acid sequence, 427 residues long: 3-phosphoshikimate 1-carboxyvinyltransferase (427 aa).

3-phosphoshikimate is bound by residues K22, S23, and R27. Phosphoenolpyruvate is bound at residue K22. 2 residues coordinate phosphoenolpyruvate: G94 and R122. The 3-phosphoshikimate site is built by S165, Q167, D313, and K340. Q167 contacts phosphoenolpyruvate. D313 serves as the catalytic Proton acceptor. The phosphoenolpyruvate site is built by R344 and R386.

It belongs to the EPSP synthase family. In terms of assembly, monomer.

The protein resides in the cytoplasm. The enzyme catalyses 3-phosphoshikimate + phosphoenolpyruvate = 5-O-(1-carboxyvinyl)-3-phosphoshikimate + phosphate. It functions in the pathway metabolic intermediate biosynthesis; chorismate biosynthesis; chorismate from D-erythrose 4-phosphate and phosphoenolpyruvate: step 6/7. Functionally, catalyzes the transfer of the enolpyruvyl moiety of phosphoenolpyruvate (PEP) to the 5-hydroxyl of shikimate-3-phosphate (S3P) to produce enolpyruvyl shikimate-3-phosphate and inorganic phosphate. The chain is 3-phosphoshikimate 1-carboxyvinyltransferase from Koribacter versatilis (strain Ellin345).